Consider the following 416-residue polypeptide: MLRKKFLYSSAIYATSLASIIAFVAAGCGQTESGSTSDSKPQAETLKHKVSNDSIRIALTDPDNPRWISAQKDIISYVDETEAATSTITKNQDAQNNWLTQQANLSPAPKGFIIAPENGSGVGTAVNTIADKGIPIVAYDRLITGSDKYDWYVSFDNEKVGELQGLSLAAGLLGKEDGAFDSIDQMNEYLKSHMPQETISFYTIAGSQDDNNSQYFYNGAMKVLKELMKNSQNKIIDLSPEGENAVYVPGWNYGTAGQRIQSFLTINKDPAGGNKIKAVGSKPASIFKGFLAPNDGMAEQAITKLKLEGFDTQKIFVTGQDYNDKAKTFIKDGDQNMTIYKPDKVLGKVAVEVLRVLIAKKNKASRSEVENELKAKLPNISFKYDNQTYKVQGKNINTILVSPVIVTKANVDNPDA.

Positions Met-1–Gly-27 are cleaved as a signal peptide. Cys-28 carries N-palmitoyl cysteine lipidation. The S-diacylglycerol cysteine moiety is linked to residue Cys-28.

The protein localises to the cell membrane. The sequence is that of 46 kDa surface antigen (p46) from Mesomycoplasma hyopneumoniae (strain 232) (Mycoplasma hyopneumoniae).